Reading from the N-terminus, the 216-residue chain is Adenylate kinase (216 aa).

10–15 (GAGKGT) provides a ligand contact to ATP. Positions 30-59 (STGDIFRAAIKNQTPMGVEAKKFIDKGELV) are NMP. AMP is bound by residues Thr-31, Arg-36, 57 to 59 (ELV), 85 to 88 (GFPR), and Gln-92. Positions 126–164 (GRFICRNCGTTYHRLYNPTKVEGTCDVCGGHDFYQRDDD) are LID. Residue Arg-127 participates in ATP binding. Residues Cys-130 and Cys-133 each contribute to the Zn(2+) site. ATP is bound at residue 136-137 (TY). Positions 150 and 153 each coordinate Zn(2+). Residues Arg-161 and Arg-172 each contribute to the AMP site. Gln-200 is a binding site for ATP.

This sequence belongs to the adenylate kinase family. In terms of assembly, monomer.

The protein resides in the cytoplasm. It carries out the reaction AMP + ATP = 2 ADP. The protein operates within purine metabolism; AMP biosynthesis via salvage pathway; AMP from ADP: step 1/1. Catalyzes the reversible transfer of the terminal phosphate group between ATP and AMP. Plays an important role in cellular energy homeostasis and in adenine nucleotide metabolism. The protein is Adenylate kinase of Limosilactobacillus fermentum (strain NBRC 3956 / LMG 18251) (Lactobacillus fermentum).